Here is a 470-residue protein sequence, read N- to C-terminus: MNPNQKIITIGSASLGLVILNVILHVVSIIVTVLVLSNNGTGPNCNGTIIREYNETVRVERITQWYNTNIIEYIEEPSNEYYMSNTEPLCEAQGFAPFSKDNGIRIGSRGHVFVIREPFVSCSPLECRTFFLTQGSLLNDKHSNGTVKDRSPYRTLMSVEVGQSPNVYQARFEAVAWSATACHDGKKWMTVGVTGPDAQAVAVVHYGGVPVDVINSWAGDILRTQESSCTCIKGDCYWVMTDGPANRQAQYRIFKAKDGRIIGQTDINFNGGHIEECSCYPNEGKVECVCRDNWTGTNRPVLVISPDLSYTVGYLCAGIPTDTPRGEDSQFTGSCTSPLGSQGYGVKGFGFRQGNDVWAGRTISRTSRSGFEIIKIRNGWTQNSKDQIRKQVIVDNLNWSGYSGSFTLPVELTKKGCLVPCFWVEMIRGKPEEITIWTSSSSIVMCGVDHKVASWSWHDGAILPFDIDKM.

The Intravirion segment spans residues 1–14 (MNPNQKIITIGSAS). The tract at residues 11-32 (GSASLGLVILNVILHVVSIIVT) is involved in apical transport and lipid raft association. The chain crosses the membrane as a helical span at residues 15-35 (LGLVILNVILHVVSIIVTVLV). The interval 32 to 86 (TVLVLSNNGTGPNCNGTIIREYNETVRVERITQWYNTNIIEYIEEPSNEYYMSNT) is hypervariable stalk region. Over 36-470 (LSNNGTGPNC…AILPFDIDKM (435 aa)) the chain is Virion surface. Asn-39, Asn-46, and Asn-54 each carry an N-linked (GlcNAc...) asparagine; by host glycan. The head of neuraminidase stretch occupies residues 89–470 (LCEAQGFAPF…AILPFDIDKM (382 aa)). Intrachain disulfides connect Cys-90–Cys-417, Cys-122–Cys-127, Cys-182–Cys-229, Cys-231–Cys-236, Cys-277–Cys-290, Cys-279–Cys-288, Cys-316–Cys-335, and Cys-421–Cys-446. Substrate is bound at residue Arg-116. A glycan (N-linked (GlcNAc...) asparagine; by host) is linked at Asn-144. Residue Asp-149 is the Proton donor/acceptor of the active site. Arg-150 contacts substrate. 275–276 (EE) is a binding site for substrate. Position 291 (Arg-291) interacts with substrate. Residue Asp-292 participates in Ca(2+) binding. Asn-293 carries an N-linked (GlcNAc...) asparagine; by host glycan. Residues Gly-296 and Asp-322 each contribute to the Ca(2+) site. Arg-368 contributes to the substrate binding site. A glycan (N-linked (GlcNAc...) asparagine; by host) is linked at Asn-398. Catalysis depends on Tyr-402, which acts as the Nucleophile.

This sequence belongs to the glycosyl hydrolase 34 family. Homotetramer. Ca(2+) serves as cofactor. In terms of processing, N-glycosylated.

Its subcellular location is the virion membrane. It localises to the host apical cell membrane. The enzyme catalyses Hydrolysis of alpha-(2-&gt;3)-, alpha-(2-&gt;6)-, alpha-(2-&gt;8)- glycosidic linkages of terminal sialic acid residues in oligosaccharides, glycoproteins, glycolipids, colominic acid and synthetic substrates.. Inhibited by the neuraminidase inhibitors zanamivir (Relenza) and oseltamivir (Tamiflu). These drugs interfere with the release of progeny virus from infected cells and are effective against all influenza strains. Resistance to neuraminidase inhibitors is quite rare. Catalyzes the removal of terminal sialic acid residues from viral and cellular glycoconjugates. Cleaves off the terminal sialic acids on the glycosylated HA during virus budding to facilitate virus release. Additionally helps virus spread through the circulation by further removing sialic acids from the cell surface. These cleavages prevent self-aggregation and ensure the efficient spread of the progeny virus from cell to cell. Otherwise, infection would be limited to one round of replication. Described as a receptor-destroying enzyme because it cleaves a terminal sialic acid from the cellular receptors. May facilitate viral invasion of the upper airways by cleaving the sialic acid moieties on the mucin of the airway epithelial cells. Likely to plays a role in the budding process through its association with lipid rafts during intracellular transport. May additionally display a raft-association independent effect on budding. Plays a role in the determination of host range restriction on replication and virulence. Sialidase activity in late endosome/lysosome traffic seems to enhance virus replication. The chain is Neuraminidase from Influenza A virus (strain A/Equine/Miami/1/1963 H3N8).